The primary structure comprises 483 residues: Regulatory protein ViaA (483 aa).

Belongs to the ViaA family. As to quaternary structure, homodimer. Interacts with RavA.

The protein localises to the cytoplasm. Its function is as follows. Component of the RavA-ViaA chaperone complex, which may act on the membrane to optimize the function of some of the respiratory chains. ViaA stimulates the ATPase activity of RavA. The sequence is that of Regulatory protein ViaA from Salmonella agona (strain SL483).